Reading from the N-terminus, the 341-residue chain is Ribosomal RNA small subunit methyltransferase H (341 aa).

S-adenosyl-L-methionine contacts are provided by residues 47–49 (GGY), aspartate 64, phenylalanine 91, aspartate 109, and glutamine 116.

Belongs to the methyltransferase superfamily. RsmH family.

Its subcellular location is the cytoplasm. The enzyme catalyses cytidine(1402) in 16S rRNA + S-adenosyl-L-methionine = N(4)-methylcytidine(1402) in 16S rRNA + S-adenosyl-L-homocysteine + H(+). Specifically methylates the N4 position of cytidine in position 1402 (C1402) of 16S rRNA. This is Ribosomal RNA small subunit methyltransferase H from Rhizobium johnstonii (strain DSM 114642 / LMG 32736 / 3841) (Rhizobium leguminosarum bv. viciae).